Here is a 271-residue protein sequence, read N- to C-terminus: Tryptophan synthase alpha chain (271 aa).

Catalysis depends on proton acceptor residues E49 and D60.

It belongs to the TrpA family. As to quaternary structure, tetramer of two alpha and two beta chains.

The enzyme catalyses (1S,2R)-1-C-(indol-3-yl)glycerol 3-phosphate + L-serine = D-glyceraldehyde 3-phosphate + L-tryptophan + H2O. It functions in the pathway amino-acid biosynthesis; L-tryptophan biosynthesis; L-tryptophan from chorismate: step 5/5. In terms of biological role, the alpha subunit is responsible for the aldol cleavage of indoleglycerol phosphate to indole and glyceraldehyde 3-phosphate. In Aromatoleum aromaticum (strain DSM 19018 / LMG 30748 / EbN1) (Azoarcus sp. (strain EbN1)), this protein is Tryptophan synthase alpha chain.